A 2102-amino-acid polypeptide reads, in one-letter code: Mediator of RNA polymerase II transcription subunit 13-like (2102 aa).

6 disordered regions span residues 304–335 (SYAGAPHNQLVHGDTGISSVTLTPPTSPEEAQ), 432–487 (QRAC…QPSL), 514–587 (VTSS…LDPL), 689–758 (SSAV…TTSL), 776–819 (NSDE…DLHQ), and 947–1034 (SVVE…SSVE). Over residues 439–450 (GHPPSAGQPPQP) the composition is skewed to pro residues. Basic and acidic residues predominate over residues 455 to 467 (KMAEKLEKGDKQQ). Residues 693 to 714 (CDEDPEQESDPYAFEEGDEEFN) are compositionally biased toward acidic residues. 2 stretches are compositionally biased toward basic and acidic residues: residues 715-737 (FSDKDKKSGPEREAGKKAKREDG) and 794-804 (AEEKFGGKEPK). The span at 947–974 (SVVEQEQSCTPQTHNTFMSNSAPPSNSG) shows a compositional bias: polar residues. The span at 979 to 990 (PSPATPRISAPT) shows a compositional bias: low complexity. Polar residues predominate over residues 1015–1029 (SDLNSPASTPSTCRP). 2 consecutive short sequence motifs (LXXLL motif) follow at residues 1165–1169 (LMLLL) and 1254–1258 (LRMLL). Disordered stretches follow at residues 1451–1574 (LTQR…DGDS) and 1948–1983 (NSPTTSPVHSPGSHYHHGGDGSKGQGTDRMESHDES). Low complexity-rich tracts occupy residues 1458 to 1467 (SSSQTSSSSS), 1476 to 1502 (TPTTNSNSNTNTNTTPTSTSTSSSSSS), and 1522 to 1538 (GAQGLQSSQQSGGQSAG). Residues 1542 to 1552 (DATSATSQPQV) show a composition bias toward polar residues. Basic and acidic residues predominate over residues 1973 to 1983 (GTDRMESHDES).

This sequence belongs to the Mediator complex subunit 13 family. In terms of assembly, component of the Mediator complex.

It is found in the nucleus. Functionally, component of the Mediator complex, a coactivator involved in regulated gene transcription of nearly all RNA polymerase II-dependent genes. Mediator functions as a bridge to convey information from gene-specific regulatory proteins to the basal RNA polymerase II transcription machinery. Mediator is recruited to promoters by direct interactions with regulatory proteins and serves as a scaffold for the assembly of a functional preinitiation complex with RNA polymerase II and the general transcription factors. This chain is Mediator of RNA polymerase II transcription subunit 13-like, found in Danio rerio (Zebrafish).